The following is a 197-amino-acid chain: Probable UbiX-like flavin prenyltransferase (197 aa).

Residues 9–11 (GAT), serine 36, 87–90 (SMKT), and arginine 122 contribute to the FMN site.

Belongs to the UbiX/PAD1 family. YclB subfamily. Homododecamer.

It catalyses the reaction dimethylallyl phosphate + FMNH2 = prenylated FMNH2 + phosphate. In terms of biological role, flavin prenyltransferase that catalyzes the synthesis of the prenylated FMN cofactor (prenyl-FMN) for phenolic acid decarboxylase C. Involved in the decarboxylation and detoxification of phenolic derivatives under both aerobic and anaerobic conditions. The polypeptide is Probable UbiX-like flavin prenyltransferase (ecdB) (Escherichia coli).